A 1085-amino-acid polypeptide reads, in one-letter code: Carbamoyl phosphate synthase large chain (1085 aa).

The segment at 1-399 (MPKRTDISNI…ALQKALCSLE (399 aa)) is carboxyphosphate synthetic domain. ATP-binding residues include Arg127, Arg167, Gly174, Glu206, Leu208, Glu213, Gly239, Val240, His241, Gln283, and Glu297. Residues 131–326 (KEAMLKIGMD…IAKVATMLAV (196 aa)) form the ATP-grasp 1 domain. Residues Gln283, Glu297, and Asn299 each coordinate Mg(2+). Residues Gln283, Glu297, and Asn299 each contribute to the Mn(2+) site. Positions 400–552 (NNWLGFESLS…APNPLPPIEN (153 aa)) are oligomerization domain. Residues 553–951 (KQEKKEKKIL…AFFKAQTACF (399 aa)) form a carbamoyl phosphate synthetic domain region. One can recognise an ATP-grasp 2 domain in the interval 678–871 (SLFLKELDIK…LAKVATRVMV (194 aa)). ATP is bound by residues Arg714, Lys756, Leu758, Glu763, Gly788, Ile789, His790, Ser791, Gln830, and Glu842. Residues Gln830, Glu842, and Asn844 each contribute to the Mg(2+) site. The Mn(2+) site is built by Gln830, Glu842, and Asn844. An MGS-like domain is found at 952-1085 (NPIKNKGLIF…ELLALQDYLK (134 aa)). The interval 952–1085 (NPIKNKGLIF…ELLALQDYLK (134 aa)) is allosteric domain.

This sequence belongs to the CarB family. Composed of two chains; the small (or glutamine) chain promotes the hydrolysis of glutamine to ammonia, which is used by the large (or ammonia) chain to synthesize carbamoyl phosphate. Tetramer of heterodimers (alpha,beta)4. Requires Mg(2+) as cofactor. Mn(2+) is required as a cofactor.

The enzyme catalyses hydrogencarbonate + L-glutamine + 2 ATP + H2O = carbamoyl phosphate + L-glutamate + 2 ADP + phosphate + 2 H(+). It catalyses the reaction hydrogencarbonate + NH4(+) + 2 ATP = carbamoyl phosphate + 2 ADP + phosphate + 2 H(+). The protein operates within amino-acid biosynthesis; L-arginine biosynthesis; carbamoyl phosphate from bicarbonate: step 1/1. It functions in the pathway pyrimidine metabolism; UMP biosynthesis via de novo pathway; (S)-dihydroorotate from bicarbonate: step 1/3. Its function is as follows. Large subunit of the glutamine-dependent carbamoyl phosphate synthetase (CPSase). CPSase catalyzes the formation of carbamoyl phosphate from the ammonia moiety of glutamine, carbonate, and phosphate donated by ATP, constituting the first step of 2 biosynthetic pathways, one leading to arginine and/or urea and the other to pyrimidine nucleotides. The large subunit (synthetase) binds the substrates ammonia (free or transferred from glutamine from the small subunit), hydrogencarbonate and ATP and carries out an ATP-coupled ligase reaction, activating hydrogencarbonate by forming carboxy phosphate which reacts with ammonia to form carbamoyl phosphate. The chain is Carbamoyl phosphate synthase large chain from Helicobacter pylori (strain ATCC 700392 / 26695) (Campylobacter pylori).